The primary structure comprises 96 residues: Large ribosomal subunit protein bL27 (96 aa).

The propeptide occupies 1 to 10 (MLLKLNIQLF).

Belongs to the bacterial ribosomal protein bL27 family. In terms of processing, the N-terminus is cleaved by ribosomal processing cysteine protease Prp.

The protein is Large ribosomal subunit protein bL27 of Phytoplasma mali (strain AT).